Here is a 233-residue protein sequence, read N- to C-terminus: Nucleoside diphosphate kinase 2, chloroplastic (233 aa).

The N-terminal 67 residues, 1-67 (MEAMSGLSSP…LISHSLPRKK (67 aa)), are a transit peptide targeting the chloroplast. Positions 93, 141, 169, 175, 186, and 196 each coordinate ATP. H199 functions as the Pros-phosphohistidine intermediate in the catalytic mechanism.

The protein belongs to the NDK family. The cofactor is Mg(2+).

The protein resides in the plastid. It localises to the chloroplast. It carries out the reaction a 2'-deoxyribonucleoside 5'-diphosphate + ATP = a 2'-deoxyribonucleoside 5'-triphosphate + ADP. The enzyme catalyses a ribonucleoside 5'-diphosphate + ATP = a ribonucleoside 5'-triphosphate + ADP. In terms of biological role, major role in the synthesis of nucleoside triphosphates other than ATP. The ATP gamma phosphate is transferred to the NDP beta phosphate via a ping-pong mechanism, using a phosphorylated active-site intermediate. This is Nucleoside diphosphate kinase 2, chloroplastic (NDPK2) from Spinacia oleracea (Spinach).